Reading from the N-terminus, the 847-residue chain is Alanine--tRNA ligase (847 aa).

The Zn(2+) site is built by H554, H558, C656, and H660.

This sequence belongs to the class-II aminoacyl-tRNA synthetase family. Requires Zn(2+) as cofactor.

The protein localises to the cytoplasm. It catalyses the reaction tRNA(Ala) + L-alanine + ATP = L-alanyl-tRNA(Ala) + AMP + diphosphate. Functionally, catalyzes the attachment of alanine to tRNA(Ala) in a two-step reaction: alanine is first activated by ATP to form Ala-AMP and then transferred to the acceptor end of tRNA(Ala). Also edits incorrectly charged Ser-tRNA(Ala) and Gly-tRNA(Ala) via its editing domain. This Helicobacter pylori (strain ATCC 700392 / 26695) (Campylobacter pylori) protein is Alanine--tRNA ligase.